The sequence spans 272 residues: Tryptophan synthase alpha chain (272 aa).

Catalysis depends on proton acceptor residues glutamate 60 and aspartate 71.

Belongs to the TrpA family. Tetramer of two alpha and two beta chains.

It catalyses the reaction (1S,2R)-1-C-(indol-3-yl)glycerol 3-phosphate + L-serine = D-glyceraldehyde 3-phosphate + L-tryptophan + H2O. The protein operates within amino-acid biosynthesis; L-tryptophan biosynthesis; L-tryptophan from chorismate: step 5/5. In terms of biological role, the alpha subunit is responsible for the aldol cleavage of indoleglycerol phosphate to indole and glyceraldehyde 3-phosphate. The sequence is that of Tryptophan synthase alpha chain from Methanosarcina acetivorans (strain ATCC 35395 / DSM 2834 / JCM 12185 / C2A).